The sequence spans 378 residues: Cytochrome b (378 aa).

4 helical membrane-spanning segments follow: residues S33–M53, W77–I98, X113–L133, and F178–I198. Positions 83 and 97 each coordinate heme b. H196 is a binding site for heme b. H201 is an a ubiquinone binding site. 4 consecutive transmembrane segments (helical) span residues F226 to S246, L288 to H308, L320 to G340, and F347 to P367.

The protein belongs to the cytochrome b family. As to quaternary structure, the cytochrome bc1 complex contains 3 respiratory subunits (MT-CYB, CYC1 and UQCRFS1), 2 core proteins (UQCRC1 and UQCRC2) and probably 6 low-molecular weight proteins. Requires heme b as cofactor.

It is found in the mitochondrion inner membrane. Functionally, component of the ubiquinol-cytochrome c reductase complex (complex III or cytochrome b-c1 complex) that is part of the mitochondrial respiratory chain. The b-c1 complex mediates electron transfer from ubiquinol to cytochrome c. Contributes to the generation of a proton gradient across the mitochondrial membrane that is then used for ATP synthesis. This Nannacara anomala (Goldeneye cichlid) protein is Cytochrome b (mt-cyb).